The primary structure comprises 155 residues: Transcriptional repressor NrdR (155 aa).

Residues 3 to 34 (CPFCGNVDTQVKDSRPAEDHVAIRRRRFCPAC) fold into a zinc finger. The ATP-cone domain maps to 49-139 (LVVIKSSGKR…VYKNFQAADD (91 aa)).

It belongs to the NrdR family. Zn(2+) is required as a cofactor.

Its function is as follows. Negatively regulates transcription of bacterial ribonucleotide reductase nrd genes and operons by binding to NrdR-boxes. This chain is Transcriptional repressor NrdR, found in Dinoroseobacter shibae (strain DSM 16493 / NCIMB 14021 / DFL 12).